The sequence spans 334 residues: Phenazine-1-carboxylate N-methyltransferase (334 aa).

S-adenosyl-L-methionine is bound by residues Asp198 and Arg241.

Belongs to the class I-like SAM-binding methyltransferase superfamily. Cation-independent O-methyltransferase family. In terms of assembly, homodimer in solution. Probably interacts transiently with PhzS.

The catalysed reaction is phenazine-1-carboxylate + S-adenosyl-L-methionine = 5-methyl-phenazine-1-carboxylate + S-adenosyl-L-homocysteine. Its pathway is secondary metabolite biosynthesis; pyocyanine biosynthesis. In vitro, requires PhzS for activity. Involved in the biosynthesis of pyocyanine, a blue-pigmented phenazine derivative, which plays a role in virulence. Converts phenazine-1-carboxylate (PCA) to 5-methylphenazine-1-carboxylate (5-methyl-PCA). In Pseudomonas aeruginosa (strain ATCC 15692 / DSM 22644 / CIP 104116 / JCM 14847 / LMG 12228 / 1C / PRS 101 / PAO1), this protein is Phenazine-1-carboxylate N-methyltransferase.